The primary structure comprises 390 residues: S-adenosylmethionine synthase 2 (390 aa).

Glu-9 serves as a coordination point for Mg(2+). Position 15 (His-15) interacts with ATP. Residue Glu-43 coordinates K(+). Residues Glu-56 and Gln-99 each contribute to the L-methionine site. ATP-binding positions include 167 to 169 (DGK), 235 to 238 (SGRF), Asp-246, 252 to 253 (RK), Ala-269, Lys-273, and Lys-277. L-methionine is bound at residue Asp-246. Lys-277 is a binding site for L-methionine.

Belongs to the AdoMet synthase family. As to quaternary structure, homotetramer. Mn(2+) serves as cofactor. It depends on Mg(2+) as a cofactor. The cofactor is Co(2+). K(+) is required as a cofactor.

The protein localises to the cytoplasm. It carries out the reaction L-methionine + ATP + H2O = S-adenosyl-L-methionine + phosphate + diphosphate. It functions in the pathway amino-acid biosynthesis; S-adenosyl-L-methionine biosynthesis; S-adenosyl-L-methionine from L-methionine: step 1/1. Its function is as follows. Catalyzes the formation of S-adenosylmethionine from methionine and ATP. The reaction comprises two steps that are both catalyzed by the same enzyme: formation of S-adenosylmethionine (AdoMet) and triphosphate, and subsequent hydrolysis of the triphosphate. This Nicotiana tabacum (Common tobacco) protein is S-adenosylmethionine synthase 2 (SAMS2).